Reading from the N-terminus, the 180-residue chain is Cytidylate kinase (180 aa).

7–15 (GPPGSGTTT) contributes to the ATP binding site.

The protein belongs to the cytidylate kinase family. Type 2 subfamily.

The protein resides in the cytoplasm. The catalysed reaction is CMP + ATP = CDP + ADP. It catalyses the reaction dCMP + ATP = dCDP + ADP. The polypeptide is Cytidylate kinase (cmk) (Archaeoglobus fulgidus (strain ATCC 49558 / DSM 4304 / JCM 9628 / NBRC 100126 / VC-16)).